An 815-amino-acid polypeptide reads, in one-letter code: Lon protease 1 (815 aa).

In terms of domain architecture, Lon N-terminal spans I14–L211. ATP is bound at residue G370–T377. Residues T606–A787 form the Lon proteolytic domain. Residues S693 and K736 contribute to the active site.

The protein belongs to the peptidase S16 family. In terms of assembly, homohexamer. Organized in a ring with a central cavity.

The protein resides in the cytoplasm. It catalyses the reaction Hydrolysis of proteins in presence of ATP.. Its function is as follows. ATP-dependent serine protease that mediates the selective degradation of mutant and abnormal proteins as well as certain short-lived regulatory proteins. Required for cellular homeostasis and for survival from DNA damage and developmental changes induced by stress. Degrades polypeptides processively to yield small peptide fragments that are 5 to 10 amino acids long. Binds to DNA in a double-stranded, site-specific manner. This is Lon protease 1 from Herpetosiphon aurantiacus (strain ATCC 23779 / DSM 785 / 114-95).